The chain runs to 49 residues: Disintegrin echistatin-gamma (49 aa).

In terms of domain architecture, Disintegrin spans 1 to 47 (DCASGPCCRDCKFLEEGTICNMARGDDMDDYCNGKTCDCPRNPHKWP). Cystine bridges form between C2-C11, C7-C32, C8-C37, and C20-C39. The short motif at 24-26 (RGD) is the Cell attachment site element.

This sequence belongs to the venom metalloproteinase (M12B) family. P-II subfamily. P-IIa sub-subfamily. Monomer. As to expression, expressed by the venom gland.

It localises to the secreted. Functionally, has antiplatelet activities on guinea pig, followed by human, rabbit and rat platelet-rich plasma. The sequence is that of Disintegrin echistatin-gamma from Echis pyramidum leakeyi (Leakey's carpet viper).